Here is a 165-residue protein sequence, read N- to C-terminus: Phosphopantetheine adenylyltransferase (165 aa).

Residue Ser-8 participates in substrate binding. Residues 8–9 and His-16 each bind ATP; that span reads SF. Residues Lys-40, Thr-72, and Arg-86 each contribute to the substrate site. Residues 87–89, Glu-97, and 122–128 contribute to the ATP site; these read GLR and YSFLSSS.

Belongs to the bacterial CoaD family. In terms of assembly, homohexamer. Mg(2+) serves as cofactor.

Its subcellular location is the cytoplasm. It catalyses the reaction (R)-4'-phosphopantetheine + ATP + H(+) = 3'-dephospho-CoA + diphosphate. It participates in cofactor biosynthesis; coenzyme A biosynthesis; CoA from (R)-pantothenate: step 4/5. Functionally, reversibly transfers an adenylyl group from ATP to 4'-phosphopantetheine, yielding dephospho-CoA (dPCoA) and pyrophosphate. This is Phosphopantetheine adenylyltransferase from Synechococcus sp. (strain WH7803).